Here is a 23-residue protein sequence, read N- to C-terminus: MKYFFMGISFMVIVWAGTFALMI.

The chain crosses the membrane as a helical span at residues 3 to 23 (YFFMGISFMVIVWAGTFALMI).

Its subcellular location is the cell inner membrane. This is an uncharacterized protein from Escherichia coli (strain K12).